Reading from the N-terminus, the 101-residue chain is Large ribosomal subunit protein uL24 (101 aa).

It belongs to the universal ribosomal protein uL24 family. As to quaternary structure, part of the 50S ribosomal subunit.

One of two assembly initiator proteins, it binds directly to the 5'-end of the 23S rRNA, where it nucleates assembly of the 50S subunit. Functionally, one of the proteins that surrounds the polypeptide exit tunnel on the outside of the subunit. The protein is Large ribosomal subunit protein uL24 of Ligilactobacillus salivarius (strain UCC118) (Lactobacillus salivarius).